The primary structure comprises 180 residues: Chromatin structure-remodeling complex protein RSC14 (180 aa).

Interacts with STH1, RSC3 and ARP9. Component of the two forms of the RSC complex composed of at least either RSC1 or RSC2, and ARP7, ARP9, LDB7, NPL6, RSC3, RSC30, RSC4, RSC58, RSC6, RSC8, RSC9, SFH1, STH1, HTL1 and probably RTT102. The complexes interact with histone and histone variant components of centromeric chromatin. Component of a fungal-specific module (HTL1-LDB7-NPL6-RSC3-RSC30) within the RSC complex.

It is found in the nucleus. Its function is as follows. Component of the chromatin structure-remodeling complex (RSC), which is involved in transcription regulation and nucleosome positioning. RSC is responsible for the transfer of a histone octamer from a nucleosome core particle to naked DNA. The reaction requires ATP and involves an activated RSC-nucleosome intermediate. Remodeling reaction also involves DNA translocation, DNA twist and conformational change. As a reconfigurer of centromeric and flanking nucleosomes, RSC complex is required both for proper kinetochore function in chromosome segregation and, via a PKC1-dependent signaling pathway, for organization of the cellular cytoskeleton. Together with HTL1, NPL6, RSC3, RSC30 components, defines a fungal-specific module within the RSC complex that plays a role in many cellular functions including the maintenance of cell wall integrity. May be involved in the transfer of mannosylphosphate (MP) groups into N-linked oligosaccharides. In Saccharomyces cerevisiae (strain ATCC 204508 / S288c) (Baker's yeast), this protein is Chromatin structure-remodeling complex protein RSC14 (LDB7).